Consider the following 308-residue polypeptide: uncharacterized protein (308 aa).

This is an uncharacterized protein from Methanocaldococcus jannaschii (strain ATCC 43067 / DSM 2661 / JAL-1 / JCM 10045 / NBRC 100440) (Methanococcus jannaschii).